The following is a 3746-amino-acid chain: N-(5-amino-5-carboxypentanoyl)-L-cysteinyl-D-valine synthase (3746 aa).

Residues 299 to 711 (EEVVERHEDK…GRADFQIKLR (413 aa)) form an adenylation (A) domain 1 region. One can recognise a Carrier 1 domain in the interval 818 to 895 (DLRGDTEIAL…RMADLLQNKQ (78 aa)). Residue Ser-855 is modified to O-(pantetheine 4'-phosphoryl)serine. Positions 918 to 1372 (NIYLANSLQQ…YLSSIQLEQL (455 aa)) are condensation (C) domain 1. The adenylation (A) domain 2 stretch occupies residues 1391–1801 (FENEASQKPD…GRNDFQVKIR (411 aa)). The Carrier 2 domain maps to 1902 to 1979 (PPRSEIERSL…AQTHLILNDA (78 aa)). Ser-1939 is modified (O-(pantetheine 4'-phosphoryl)serine). The interval 1994–2434 (QMIPVSRAQE…SELSAEGINE (441 aa)) is condensation (C) domain 2. Residues 2478-2883 (AFLAAEKIAV…GRGDLQIKMR (406 aa)) form an adenylation (A) domain 3 region. One can recognise a Carrier 3 domain in the interval 2991–3066 (PPRNIIEAKM…ALHDHVFMKD (76 aa)). An O-(pantetheine 4'-phosphoryl)serine modification is found at Ser-3026. The epimerase (E) domain stretch occupies residues 3084–3500 (GEAPLLPIQD…NKILDGRASQ (417 aa)). The thioesterase (TE) domain stretch occupies residues 3530-3732 (TLFLLPPGEG…FSWVGNPQQV (203 aa)).

Belongs to the NRP synthetase family. Requires pantetheine 4'-phosphate as cofactor. Mg(2+) serves as cofactor.

The protein resides in the cytoplasm. It localises to the cytosol. The protein localises to the vacuole membrane. The enzyme catalyses L-2-aminoadipate + L-valine + L-cysteine + 3 ATP + H2O = N-[(5S)-5-amino-5-carboxypentanoyl]-L-cysteinyl-D-valine + 3 AMP + 3 diphosphate + 3 H(+). It functions in the pathway antibiotic biosynthesis; penicillin G biosynthesis; penicillin G from L-alpha-aminoadipate and L-cysteine and L-valine: step 1/3. Nonribosomal peptide synthetase; part of the gene cluster that mediates the biosynthesis of penicillin, the world's most important antibiotic. The trimodular NRPS acvA produces the tripeptide N-[(5S)-5-amino-5-carboxypentanoyl]-L-cysteinyl-D-valine (LLD-ACV or ACV) via condensation of the 3 residues L-2-aminoadipate, L-cysteine and L-valine. The precursor amino acids for penicillin biosynthesis are withdrawn from the vacuolar amino acid pool by the MFS-type transporter penV. Each of the constituent amino acids of the tripeptide ACV are activated as aminoacyl-adenylates with peptide bonds formed through the participation of amino acid thioester intermediates. The penicillin biosynthesis occurs via 3 enzymatic steps, the first corresponding to the production of the tripeptide N-[(5S)-5-amino-5-carboxypentanoyl]-L-cysteinyl-D-valine (LLD-ACV or ACV) by the NRPS acvA. The tripeptide ACV is then cyclized to isopenicillin N (IPN) by the isopenicillin N synthase ipnA that forms the beta-lactam nucleus. Finally, the alpha-aminoadipyl side chain is exchanged for phenylacetic acid by the isopenicillin N acyltransferase aatA to yield penicillin in the peroxisomal matrix. This chain is N-(5-amino-5-carboxypentanoyl)-L-cysteinyl-D-valine synthase, found in Penicillium chrysogenum (Penicillium notatum).